The chain runs to 268 residues: Zinc transporter ZupT (268 aa).

5 helical membrane-spanning segments follow: residues 6 to 26 (LAFL…LIAF), 37 to 57 (SFAL…DIFF), 70 to 90 (TQGY…IGFI), 125 to 145 (GLFT…ATFV), and 152 to 172 (SIGL…GIAV). Positions 136 and 139 each coordinate Fe(2+). Positions 139 and 164 each coordinate Zn(2+). Residues Asn-165, Glu-168, and Glu-197 each coordinate Fe(2+). Glu-168 contributes to the Zn(2+) binding site. 2 helical membrane-spanning segments follow: residues 201-221 (AIVA…GIIF) and 248-268 (MSMY…LLLA).

Belongs to the ZIP transporter (TC 2.A.5) family. ZupT subfamily.

It is found in the cell membrane. The enzyme catalyses Zn(2+)(in) = Zn(2+)(out). Functionally, mediates zinc uptake. May also transport other divalent cations. In Oceanobacillus iheyensis (strain DSM 14371 / CIP 107618 / JCM 11309 / KCTC 3954 / HTE831), this protein is Zinc transporter ZupT.